Here is a 488-residue protein sequence, read N- to C-terminus: ATP synthase subunit beta (488 aa).

164 to 171 (GGAGVGKT) provides a ligand contact to ATP.

The protein belongs to the ATPase alpha/beta chains family. F-type ATPases have 2 components, CF(1) - the catalytic core - and CF(0) - the membrane proton channel. CF(1) has five subunits: alpha(3), beta(3), gamma(1), delta(1), epsilon(1). CF(0) has four main subunits: a(1), b(1), b'(1) and c(9-12).

The protein resides in the cellular thylakoid membrane. The catalysed reaction is ATP + H2O + 4 H(+)(in) = ADP + phosphate + 5 H(+)(out). Functionally, produces ATP from ADP in the presence of a proton gradient across the membrane. The catalytic sites are hosted primarily by the beta subunits. This Prochlorococcus marinus (strain MIT 9303) protein is ATP synthase subunit beta.